A 164-amino-acid chain; its full sequence is Lipoprotein signal peptidase (164 aa).

Helical transmembrane passes span 12 to 32 (FLWL…WIVA), 70 to 90 (WLFT…LKET), and 93 to 113 (QQVM…GNVF). Catalysis depends on residues Asp-123 and Asp-141. The helical transmembrane segment at 133 to 153 (YWPAFNVADSAICLGAFLLVI) threads the bilayer.

It belongs to the peptidase A8 family.

The protein resides in the cell inner membrane. The catalysed reaction is Release of signal peptides from bacterial membrane prolipoproteins. Hydrolyzes -Xaa-Yaa-Zaa-|-(S,diacylglyceryl)Cys-, in which Xaa is hydrophobic (preferably Leu), and Yaa (Ala or Ser) and Zaa (Gly or Ala) have small, neutral side chains.. It functions in the pathway protein modification; lipoprotein biosynthesis (signal peptide cleavage). Functionally, this protein specifically catalyzes the removal of signal peptides from prolipoproteins. The chain is Lipoprotein signal peptidase from Pseudoalteromonas atlantica (strain T6c / ATCC BAA-1087).